A 579-amino-acid chain; its full sequence is SHC-transforming protein 1 (579 aa).

Residue Met-1 is modified to N-acetylmethionine. The disordered stretch occupies residues 1 to 137; it reads MDLLPPKPKY…QLGGEEWTRH (137 aa). A compositionally biased stretch (low complexity) spans 16–44; sequence ESLSSLEEGASGSTPPEELPSPSASSLGP. A phosphoserine mark is found at Ser-36 and Ser-139. Position 154 is an N6-acetyllysine (Lys-154). The 184-residue stretch at 156–339 folds into the PID domain; that stretch reads MGPGVSYLVR…AGFDGSAWDE (184 aa). The tract at residues 337–357 is disordered; that stretch reads WDEEEEEPPDHQYYNDFPGKE. The CH1 stretch occupies residues 340–483; sequence EEEEPPDHQY…SMAEQLQGEP (144 aa). Tyr-349, Tyr-350, and Tyr-423 each carry phosphotyrosine. Positions 432–451 are disordered; it reads ARQAGGGAGPPNPSLNGSAP. Phosphoserine is present on Ser-449. Residues 484–575 form the SH2 domain; sequence WFHGKLSRRE…GSELCLQQPV (92 aa).

Interacts with CPNE3; this interaction may mediate the binding of CPNE3 with ERBB2. Interacts with the NPXY motif of tyrosine-phosphorylated IGF1R and INSR in vitro via the PID domain. Once activated, binds to GRB2. Interacts with tyrosine-phosphorylated DDR2 and CD3T. Interacts with the N-terminal region of APS. Interacts with GRB7 and KIT. Interacts with PTK2/FAK1. Interacts with phosphorylated LRP1 and IRS4. Interacts with FLT4 (tyrosine-phosphorylated). Interacts with PDGFRB (tyrosine-phosphorylated). Interacts with ERBB4. Interacts with TEK/TIE2 (tyrosine-phosphorylated). Interacts with ALK, GAB2, TRIM31, INPP5D/SHIP1 and INPPL1/SHIP2. Interacts with PTPN6/SHP (tyrosine phosphorylated). Identified in a complex containing FGFR4, NCAM1, CDH2, PLCG1, FRS2, SRC, SHC1, GAP43 and CTTN. Interacts with EPHB1 and GRB2; activates the MAPK/ERK cascade to regulate cell migration. Interacts with the Trk receptors NTRK1, NTRK2 and NTRK3; in a phosphotyrosine-dependent manner. Interacts with CEACAM1; this interaction is CEACAM1-phosphorylation-dependent and mediates interaction with EGFR or INSR resulting in decrease coupling of SHC1 to the MAPK3/ERK1-MAPK1/ERK2 pathway. Interacts (via PID domain) with PEAK1 (when phosphorylated at 'Tyr-1177'). Found in a complex with PPP1CA, PPP1CC, SHC1 and PEAK1. In terms of processing, phosphorylated in response to FLT4 signaling. Tyrosine phosphorylated by ligand-activated PDGFRB. May be tyrosine phosphorylated by activated PTK2/FAK1. Tyrosine phosphorylated by TEK/TIE2. Tyrosine phosphorylated by activated PTK2B/PYK2. Dephosphorylation by PTPN2 may regulate interaction with GRB2. Phosphorylated by activated epidermal growth factor receptor. Phosphorylated in response to KIT signaling. Isoform p47Shc and isoform p52Shc are phosphorylated on tyrosine residues of the Pro-rich domain. Isoform p66Shc is phosphorylated on Ser-36 by PRKCB upon treatment with insulin, hydrogen peroxide or irradiation with ultraviolet light. FLT3 signaling promotes tyrosine phosphorylation of isoform p47Shc and isoform p52Shc. Also tyrosine phosphorylated by ligand-activated ALK. Widely expressed. Expressed in neural stem cells but absent in mature neurons.

The protein resides in the cytoplasm. Its subcellular location is the cell junction. It localises to the focal adhesion. The protein localises to the mitochondrion matrix. It is found in the mitochondrion. Functionally, signaling adapter that couples activated growth factor receptors to signaling pathways. Participates in signaling downstream of the angiopoietin receptor TEK/TIE2, and plays a role in the regulation of endothelial cell migration and sprouting angiogenesis. Participates in a signaling cascade initiated by activated KIT and KITLG/SCF. Isoform p47Shc and isoform p52Shc, once phosphorylated, couple activated receptor kinases to Ras via the recruitment of the GRB2/SOS complex and are implicated in the cytoplasmic propagation of mitogenic signals. Isoform p47Shc and isoform p52 may thus function as initiators of the Ras signaling cascade in various non-neuronal systems. Isoform p66Shc does not mediate Ras activation, but is involved in signal transduction pathways that regulate the cellular response to oxidative stress and life span. Isoform p66Shc acts as a downstream target of the tumor suppressor p53 and is indispensable for the ability of stress-activated p53 to induce elevation of intracellular oxidants, cytochrome c release and apoptosis. The expression of isoform p66Shc has been correlated with life span. The protein is SHC-transforming protein 1 (Shc1) of Mus musculus (Mouse).